The primary structure comprises 474 residues: MFS transporter SAT21 (474 aa).

6 consecutive transmembrane segments (helical) span residues 7 to 27 (LVLPFILYLLFRLSHFLLEVP), 64 to 84 (LVVGWKMTFDSIPGLMSILYF), 101 to 121 (CVGYLLAILWVLITCLFHQVF), 131 to 151 (LFLFIGGGQLVFAAVITAFVA), 162 to 182 (FLFLLAAMPHMDKVASPALAT), and 189 to 209 (LFLPSLVSMAIVVICVALLQM). Positions 220 to 252 (KVVGSTSDQTEPFLRSSSNSSQESGTAAPAIDP) are disordered. Polar residues predominate over residues 222–244 (VGSTSDQTEPFLRSSSNSSQESG). A glycan (N-linked (GlcNAc...) asparagine) is linked at N238. A run of 6 helical transmembrane segments spans residues 276–296 (FICYLCFFLKSNAMASEAFIF), 315–335 (LALSSGAVISTLIICPLANAT), 346–366 (INIGAVHASSIVLVASFIMAW), 374–394 (FIFSMLAAGFGEGLEPALQGV), 406–426 (SIFALMCTCSLLGDMTGGPLM), and 445–465 (FLASALVFGAVIVLAHLLWAL).

Belongs to the major facilitator superfamily.

It is found in the cell membrane. MFS transporter; part of the satratoxin SC3 cluster involved in the biosynthesis of satratoxins, trichothecene mycotoxins that are associated with human food poisonings. Satratoxins are suggested to be made by products of multiple gene clusters (SC1, SC2 and SC3) that encode 21 proteins in all, including polyketide synthases, acetyltransferases, and other enzymes expected to modify the trichothecene skeleton. SC1 encodes 10 proteins, SAT1 to SAT10. The largest are SAT8, which encodes a putative polyketide synthase (PKS) with a conventional non-reducing architecture, and SAT10, a putative protein containing four ankyrin repeats and thus may be involved in protein scaffolding. The putative short-chain reductase SAT3 may assist the PKS in some capacity. SAT6 contains a secretory lipase domain and acts probably as a trichothecene esterase. SAT5 encodes a putative acetyltransferase, and so, with SAT6, may affect endogenous protection from toxicity. The probable transcription factor SAT9 may regulate the expression of the SC1 cluster. SC2 encodes proteins SAT11 to SAT16, the largest of which encodes the putative reducing PKS SAT13. SAT11 is a cytochrome P450 monooxygenase, while SAT14 and SAT16 are probable acetyltransferases. The SC2 cluster may be regulated by the transcription factor SAT15. SC3 is a small cluster that encodes 5 proteins, SAT17 to SAT21. SAT21 is a putative MFS-type transporter which may have a role in exporting secondary metabolites. The four other proteins putatively encoded in SC3 include the taurine hydroxylase-like protein SAT17, the O-methyltransferase SAT18, the acetyltransferase SAT19, and the Cys6-type zinc finger SAT20, the latter being probably involved in regulation of SC3 expression. The protein is MFS transporter SAT21 of Stachybotrys chartarum (strain CBS 109288 / IBT 7711) (Toxic black mold).